The chain runs to 327 residues: Phenylalanine--tRNA ligase alpha subunit (327 aa).

Glutamate 252 is a binding site for Mg(2+).

This sequence belongs to the class-II aminoacyl-tRNA synthetase family. Phe-tRNA synthetase alpha subunit type 1 subfamily. As to quaternary structure, tetramer of two alpha and two beta subunits. The cofactor is Mg(2+).

The protein localises to the cytoplasm. The enzyme catalyses tRNA(Phe) + L-phenylalanine + ATP = L-phenylalanyl-tRNA(Phe) + AMP + diphosphate + H(+). The polypeptide is Phenylalanine--tRNA ligase alpha subunit (Shewanella baltica (strain OS185)).